Reading from the N-terminus, the 123-residue chain is uncharacterized protein (123 aa).

This is an uncharacterized protein from Aquifex aeolicus (strain VF5).